A 160-amino-acid polypeptide reads, in one-letter code: Small ribosomal subunit protein uS7 (160 aa).

Belongs to the universal ribosomal protein uS7 family. In terms of assembly, part of the 30S ribosomal subunit. Contacts proteins S9 and S11.

Its function is as follows. One of the primary rRNA binding proteins, it binds directly to 16S rRNA where it nucleates assembly of the head domain of the 30S subunit. Is located at the subunit interface close to the decoding center, probably blocks exit of the E-site tRNA. The sequence is that of Small ribosomal subunit protein uS7 from Rickettsia massiliae (strain Mtu5).